We begin with the raw amino-acid sequence, 161 residues long: Allophycocyanin beta chain (161 aa).

The residue at position 71 (N71) is an N4-methylasparagine. C81 serves as a coordination point for (2R,3E)-phycocyanobilin.

It belongs to the phycobiliprotein family. Heterodimer of an alpha and a beta chain. Contains one covalently linked phycocyanobilin chromophore.

The protein localises to the cellular thylakoid membrane. Functionally, light-harvesting photosynthetic bile pigment-protein from the phycobiliprotein complex. Allophycocyanin has a maximum absorption at approximately 650 nanometers. This Arthrospira platensis (Spirulina platensis) protein is Allophycocyanin beta chain (apcB).